Reading from the N-terminus, the 198-residue chain is FMN-dependent NADH:quinone oxidoreductase (198 aa).

FMN contacts are provided by residues Ser10, 16–18 (SQS), 94–97 (MYNF), and 138–141 (TRGG).

It belongs to the azoreductase type 1 family. Homodimer. The cofactor is FMN.

The catalysed reaction is 2 a quinone + NADH + H(+) = 2 a 1,4-benzosemiquinone + NAD(+). The enzyme catalyses N,N-dimethyl-1,4-phenylenediamine + anthranilate + 2 NAD(+) = 2-(4-dimethylaminophenyl)diazenylbenzoate + 2 NADH + 2 H(+). Quinone reductase that provides resistance to thiol-specific stress caused by electrophilic quinones. Functionally, also exhibits azoreductase activity. Catalyzes the reductive cleavage of the azo bond in aromatic azo compounds to the corresponding amines. The polypeptide is FMN-dependent NADH:quinone oxidoreductase (Shewanella putrefaciens (strain CN-32 / ATCC BAA-453)).